Consider the following 64-residue polypeptide: Large ribosomal subunit protein bL35 (64 aa).

Composition is skewed to basic residues over residues 1–15 (MPKQ…KRFR) and 23–43 (VRQK…RTRR). Residues 1 to 64 (MPKQKSHSGA…AGRIKRLLAR (64 aa)) are disordered.

This sequence belongs to the bacterial ribosomal protein bL35 family.

The sequence is that of Large ribosomal subunit protein bL35 from Frankia alni (strain DSM 45986 / CECT 9034 / ACN14a).